The sequence spans 244 residues: Phosphate propanoyltransferase (244 aa).

CoA is bound at residue 52-54 (ISA). Zn(2+) is bound by residues His56 and His58. Arg106 is a CoA binding site. Residue Arg112 coordinates phosphate. Positions 118, 166, 168, and 214 each coordinate Zn(2+). Asn221 is a binding site for CoA.

Belongs to the PduL family. As to quaternary structure, full-length protein forms large oligomers. Possible homotrimer and monomer, when purified in the absence of the encapsulation peptide (EP, residues 1-20). The EP may influence oligomerization. Zn(2+) serves as cofactor.

The protein resides in the bacterial microcompartment. The enzyme catalyses propanoyl-CoA + phosphate = propanoyl phosphate + CoA. Functionally, part of a bacterial microcompartment (BMC) locus required for growth on plant and algal sugars, including L-fucose and L-rhamnose. Thought to be active on lactyl-CoA in a lactaldehyde-degradation pathway. CoA is regenerated within the BMC via this enzyme, although there must also be cofactor transport across the BMC. Directly targeted to the BMC. This is Phosphate propanoyltransferase from Planctopirus limnophila (strain ATCC 43296 / DSM 3776 / IFAM 1008 / Mu 290) (Planctomyces limnophilus).